Here is an 88-residue protein sequence, read N- to C-terminus: Small ribosomal subunit protein uS15 (88 aa).

Belongs to the universal ribosomal protein uS15 family. As to quaternary structure, part of the 30S ribosomal subunit. Forms a bridge to the 50S subunit in the 70S ribosome, contacting the 23S rRNA.

One of the primary rRNA binding proteins, it binds directly to 16S rRNA where it helps nucleate assembly of the platform of the 30S subunit by binding and bridging several RNA helices of the 16S rRNA. Its function is as follows. Forms an intersubunit bridge (bridge B4) with the 23S rRNA of the 50S subunit in the ribosome. This chain is Small ribosomal subunit protein uS15, found in Verminephrobacter eiseniae (strain EF01-2).